A 227-amino-acid chain; its full sequence is Cytochrome c oxidase subunit 2 (227 aa).

The Mitochondrial intermembrane portion of the chain corresponds to 1-14 (MAYPVQLGFQDAAS). The chain crosses the membrane as a helical span at residues 15–45 (PIMEELLYFHDHTLMIMFLISSLVLYIISLM). Residues 46-59 (LTTELMHTNTMDAQ) lie on the Mitochondrial matrix side of the membrane. The helical transmembrane segment at 60–87 (EVETVWTILPAAILILIALPSLRILYMM) threads the bilayer. The Mitochondrial intermembrane portion of the chain corresponds to 88–227 (DEITTPSLTL…HFEEWLLSML (140 aa)). Cu cation contacts are provided by histidine 161, cysteine 196, glutamate 198, cysteine 200, histidine 204, and methionine 207. Glutamate 198 provides a ligand contact to Mg(2+).

It belongs to the cytochrome c oxidase subunit 2 family. As to quaternary structure, component of the cytochrome c oxidase (complex IV, CIV), a multisubunit enzyme composed of 14 subunits. The complex is composed of a catalytic core of 3 subunits MT-CO1, MT-CO2 and MT-CO3, encoded in the mitochondrial DNA, and 11 supernumerary subunits COX4I, COX5A, COX5B, COX6A, COX6B, COX6C, COX7A, COX7B, COX7C, COX8 and NDUFA4, which are encoded in the nuclear genome. The complex exists as a monomer or a dimer and forms supercomplexes (SCs) in the inner mitochondrial membrane with NADH-ubiquinone oxidoreductase (complex I, CI) and ubiquinol-cytochrome c oxidoreductase (cytochrome b-c1 complex, complex III, CIII), resulting in different assemblies (supercomplex SCI(1)III(2)IV(1) and megacomplex MCI(2)III(2)IV(2)). Found in a complex with TMEM177, COA6, COX18, COX20, SCO1 and SCO2. Interacts with TMEM177 in a COX20-dependent manner. Interacts with COX20. Interacts with COX16. Cu cation is required as a cofactor.

The protein localises to the mitochondrion inner membrane. The enzyme catalyses 4 Fe(II)-[cytochrome c] + O2 + 8 H(+)(in) = 4 Fe(III)-[cytochrome c] + 2 H2O + 4 H(+)(out). Component of the cytochrome c oxidase, the last enzyme in the mitochondrial electron transport chain which drives oxidative phosphorylation. The respiratory chain contains 3 multisubunit complexes succinate dehydrogenase (complex II, CII), ubiquinol-cytochrome c oxidoreductase (cytochrome b-c1 complex, complex III, CIII) and cytochrome c oxidase (complex IV, CIV), that cooperate to transfer electrons derived from NADH and succinate to molecular oxygen, creating an electrochemical gradient over the inner membrane that drives transmembrane transport and the ATP synthase. Cytochrome c oxidase is the component of the respiratory chain that catalyzes the reduction of oxygen to water. Electrons originating from reduced cytochrome c in the intermembrane space (IMS) are transferred via the dinuclear copper A center (CU(A)) of subunit 2 and heme A of subunit 1 to the active site in subunit 1, a binuclear center (BNC) formed by heme A3 and copper B (CU(B)). The BNC reduces molecular oxygen to 2 water molecules using 4 electrons from cytochrome c in the IMS and 4 protons from the mitochondrial matrix. The protein is Cytochrome c oxidase subunit 2 (MT-CO2) of Lemur catta (Ring-tailed lemur).